An 837-amino-acid polypeptide reads, in one-letter code: Tuftelin-interacting protein 11 (837 aa).

Basic and acidic residues-rich tracts occupy residues 1-13 (MSLS…GEGR) and 53-64 (VWAERDSDDERP). Disordered regions lie at residues 1 to 21 (MSLS…DDER), 53 to 72 (VWAE…KRAR), and 85 to 133 (LKKG…KGFA). The segment at 1-50 (MSLSHLYRDGEGRIDDDDDERENFEITDWDLQNEFNPNRQRHWQTKEEAT) is required for interaction with DHX15. Residues Ser-2, Ser-59, and Ser-98 each carry the phosphoserine modification. Positions 91 to 102 (EEAELEDSDDEE) are enriched in acidic residues. Over residues 103–116 (KPVKQDDFPKDFGP) the composition is skewed to basic and acidic residues. A Phosphoserine modification is found at Ser-144. The 47-residue stretch at 149 to 195 (TKGIGQKLLQKMGYVPGRGLGKNAQGIINPIEAKQRKGKGAVGAYGS) folds into the G-patch domain. The tract at residues 179-236 (IEAKQRKGKGAVGAYGSERTTQSMQDFPVVDSEEEAEEEFQKELSQWRKDPSGSKKKP) is disordered. The residue at position 210 (Ser-210) is a Phosphoserine. The span at 217 to 231 (EFQKELSQWRKDPSG) shows a compositional bias: basic and acidic residues. Residues 700-705 (VKDKFN) carry the Nuclear localization signal motif. A required for nuclear speckle localization region spans residues 710-734 (IMNRAVSSNVGAYMQPGARENIAYL).

This sequence belongs to the TFP11/STIP family. Identified in the spliceosome C complex. Found in the Intron Large (IL) complex, a post-mRNA release spliceosomal complex containing the excised intron, U2, U5 and U6 snRNPs, and splicing factors. Interacts with TUFT1. Interacts with DHX15; indicative for a recruitment of DHX15 to the IL complex. Interacts with GCFC2.

The protein resides in the cytoplasm. The protein localises to the nucleus. Involved in pre-mRNA splicing, specifically in spliceosome disassembly during late-stage splicing events. Intron turnover seems to proceed through reactions in two lariat-intron associated complexes termed Intron Large (IL) and Intron Small (IS). In cooperation with DHX15 seems to mediate the transition of the U2, U5 and U6 snRNP-containing IL complex to the snRNP-free IS complex leading to efficient debranching and turnover of excised introns. May play a role in the differentiation of ameloblasts and odontoblasts or in the forming of the enamel extracellular matrix. The chain is Tuftelin-interacting protein 11 (TFIP11) from Homo sapiens (Human).